Here is a 205-residue protein sequence, read N- to C-terminus: Holliday junction branch migration complex subunit RuvA (205 aa).

The interval 1–64 (MIGKLTGLVD…EDAIRLFGFP (64 aa)) is domain I. The segment at 65–143 (SEVERDWFRL…ALGPVDSLTA (79 aa)) is domain II. The segment at 144–153 (KLTIAEAEGT) is flexible linker. A domain III region spans residues 153-205 (TAPVAAQDAITALVNLGYGRPQAAAAVATSLEALGETAPLADLIRRGLKELAR).

The protein belongs to the RuvA family. In terms of assembly, homotetramer. Forms an RuvA(8)-RuvB(12)-Holliday junction (HJ) complex. HJ DNA is sandwiched between 2 RuvA tetramers; dsDNA enters through RuvA and exits via RuvB. An RuvB hexamer assembles on each DNA strand where it exits the tetramer. Each RuvB hexamer is contacted by two RuvA subunits (via domain III) on 2 adjacent RuvB subunits; this complex drives branch migration. In the full resolvosome a probable DNA-RuvA(4)-RuvB(12)-RuvC(2) complex forms which resolves the HJ.

Its subcellular location is the cytoplasm. Its function is as follows. The RuvA-RuvB-RuvC complex processes Holliday junction (HJ) DNA during genetic recombination and DNA repair, while the RuvA-RuvB complex plays an important role in the rescue of blocked DNA replication forks via replication fork reversal (RFR). RuvA specifically binds to HJ cruciform DNA, conferring on it an open structure. The RuvB hexamer acts as an ATP-dependent pump, pulling dsDNA into and through the RuvAB complex. HJ branch migration allows RuvC to scan DNA until it finds its consensus sequence, where it cleaves and resolves the cruciform DNA. In Beijerinckia indica subsp. indica (strain ATCC 9039 / DSM 1715 / NCIMB 8712), this protein is Holliday junction branch migration complex subunit RuvA.